We begin with the raw amino-acid sequence, 1040 residues long: Multidrug resistance protein MdtB (1040 aa).

The next 12 helical transmembrane spans lie at 16–36 (FIMR…AGII), 347–367 (LMMA…NIPA), 369–389 (IIPG…MVFL), 396–416 (LTLM…IVVI), 440–460 (IGFT…PLLF), 472–492 (FAIT…TLTP), 537–557 (WLTL…WVFI), 863–883 (LGST…VLGI), 888–908 (FIHP…ALLA), 911–931 (IAGS…IGIV), 968–988 (ILMT…STGV), and 998–1018 (IGMV…TPVI).

It belongs to the resistance-nodulation-cell division (RND) (TC 2.A.6) family. MdtB subfamily. Part of a tripartite efflux system composed of MdtA, MdtB and MdtC. MdtB forms a heteromultimer with MdtC.

Its subcellular location is the cell inner membrane. Its function is as follows. The MdtABC tripartite complex confers resistance against novobiocin and deoxycholate. The protein is Multidrug resistance protein MdtB of Escherichia coli O17:K52:H18 (strain UMN026 / ExPEC).